The following is a 725-amino-acid chain: Sodium/hydrogen exchanger 7 (725 aa).

Residues methionine 1–proline 20 form a disordered region. The Cytoplasmic segment spans residues methionine 1–arginine 21. A helical membrane pass occupies residues leucine 22 to serine 42. At serine 43–aspartate 70 the chain is on the lumenal side. Residues serine 71–phenylalanine 91 traverse the membrane as a helical segment. Residues lysine 92 to arginine 95 lie on the Cytoplasmic side of the membrane. A helical membrane pass occupies residues valine 96–leucine 116. Topologically, residues arginine 117–lysine 175 are lumenal. Asparagine 145 is a glycosylation site (N-linked (GlcNAc...) asparagine). A helical membrane pass occupies residues valine 176–glycine 196. The Cytoplasmic segment spans residues tyrosine 197 to serine 210. Residues isoleucine 211–tyrosine 231 traverse the membrane as a helical segment. Residues glycine 232–aspartate 251 are Lumenal-facing. The helical transmembrane segment at cysteine 252–asparagine 272 threads the bilayer. Residues glutamate 273 to aspartate 277 lie on the Cytoplasmic side of the membrane. The chain crosses the membrane as a helical span at residues valine 278–leucine 298. At serine 299 to lysine 322 the chain is on the lumenal side. A helical membrane pass occupies residues serine 323–valine 343. At asparagine 344–lysine 349 the chain is on the cytoplasmic side. Transmembrane regions (helical) follow at residues phenylalanine 350–serine 370 and threonine 371–isoleucine 391. The Cytoplasmic portion of the chain corresponds to threonine 392 to glutamate 414. A helical transmembrane segment spans residues valine 415–phenylalanine 435. Residues glutamine 436 to proline 442 lie on the Lumenal side of the membrane. A helical membrane pass occupies residues isoleucine 443–leucine 463. Residues serine 464–lysine 474 are Cytoplasmic-facing. Residues isoleucine 475–alanine 497 form a helical membrane-spanning segment. Topologically, residues isoleucine 498 to threonine 513 are lumenal. Residues leucine 514–tryptophan 534 form a helical membrane-spanning segment. Required for trans-Golgi network localization regions lie at residues serine 533–valine 559 and proline 563–proline 568. The Cytoplasmic portion of the chain corresponds to leucine 535–alanine 725. Phosphoserine is present on serine 545. Disordered stretches follow at residues proline 567 to threonine 590 and threonine 669 to glycine 714. Residues serine 675–serine 684 show a composition bias toward low complexity. Residues glycine 687–glycine 704 show a composition bias toward basic and acidic residues.

The protein belongs to the monovalent cation:proton antiporter 1 (CPA1) transporter (TC 2.A.36) family. In terms of assembly, interacts with SCAMP1, SCAMP2 and SCAMP5; may participate in its shuttling from trans-Golgi network to recycling endosomes. In terms of processing, N-glycosylated. In terms of tissue distribution, ubiquitously expressed.

It localises to the golgi apparatus. The protein resides in the trans-Golgi network membrane. It is found in the recycling endosome membrane. Its subcellular location is the cell membrane. The catalysed reaction is Na(+)(in) + H(+)(out) = Na(+)(out) + H(+)(in). The enzyme catalyses K(+)(in) + H(+)(out) = K(+)(out) + H(+)(in). With respect to regulation, inhibited by benzamil and quinine but not by amiloride. Functionally, golgi Na(+), K(+)/(H+) antiporter. Mediates the electoneutral influx of Na(+) or K(+) in exchange for H(+). May contribute to the regulation of Golgi apparatus volume and pH. This Homo sapiens (Human) protein is Sodium/hydrogen exchanger 7 (SLC9A7).